We begin with the raw amino-acid sequence, 273 residues long: 4-hydroxy-tetrahydrodipicolinate reductase (273 aa).

Residues 12-17 (GAGGRM) and glutamate 38 contribute to the NAD(+) site. Arginine 39 contributes to the NADP(+) binding site. NAD(+) contacts are provided by residues 102 to 104 (GTT) and 126 to 129 (AANF). Histidine 159 serves as the catalytic Proton donor/acceptor. Histidine 160 is a binding site for (S)-2,3,4,5-tetrahydrodipicolinate. Lysine 163 (proton donor) is an active-site residue. Position 169–170 (169–170 (GT)) interacts with (S)-2,3,4,5-tetrahydrodipicolinate.

The protein belongs to the DapB family. Homotetramer.

It is found in the cytoplasm. It catalyses the reaction (S)-2,3,4,5-tetrahydrodipicolinate + NAD(+) + H2O = (2S,4S)-4-hydroxy-2,3,4,5-tetrahydrodipicolinate + NADH + H(+). The catalysed reaction is (S)-2,3,4,5-tetrahydrodipicolinate + NADP(+) + H2O = (2S,4S)-4-hydroxy-2,3,4,5-tetrahydrodipicolinate + NADPH + H(+). It functions in the pathway amino-acid biosynthesis; L-lysine biosynthesis via DAP pathway; (S)-tetrahydrodipicolinate from L-aspartate: step 4/4. Its function is as follows. Catalyzes the conversion of 4-hydroxy-tetrahydrodipicolinate (HTPA) to tetrahydrodipicolinate. The chain is 4-hydroxy-tetrahydrodipicolinate reductase from Escherichia coli O139:H28 (strain E24377A / ETEC).